Here is a 224-residue protein sequence, read N- to C-terminus: 7-cyano-7-deazaguanine synthase (224 aa).

8–18 is an ATP binding site; the sequence is LSGGMDSAAVI. Zn(2+) contacts are provided by C186, C196, C199, and C202.

Belongs to the QueC family. Zn(2+) is required as a cofactor.

The enzyme catalyses 7-carboxy-7-deazaguanine + NH4(+) + ATP = 7-cyano-7-deazaguanine + ADP + phosphate + H2O + H(+). The protein operates within purine metabolism; 7-cyano-7-deazaguanine biosynthesis. Its function is as follows. Catalyzes the ATP-dependent conversion of 7-carboxy-7-deazaguanine (CDG) to 7-cyano-7-deazaguanine (preQ(0)). The protein is 7-cyano-7-deazaguanine synthase of Xanthomonas euvesicatoria pv. vesicatoria (strain 85-10) (Xanthomonas campestris pv. vesicatoria).